The sequence spans 294 residues: N-acetylmuramic acid 6-phosphate etherase (294 aa).

The SIS domain maps to 54 to 217 (VTKSFEEEGR…STASMIGVGK (164 aa)). Catalysis depends on E82, which acts as the Proton donor. Residue E113 is part of the active site.

It belongs to the GCKR-like family. MurNAc-6-P etherase subfamily. As to quaternary structure, homodimer.

It catalyses the reaction N-acetyl-D-muramate 6-phosphate + H2O = N-acetyl-D-glucosamine 6-phosphate + (R)-lactate. Its pathway is amino-sugar metabolism; N-acetylmuramate degradation. Specifically catalyzes the cleavage of the D-lactyl ether substituent of MurNAc 6-phosphate, producing GlcNAc 6-phosphate and D-lactate. This Bacillus mycoides (strain KBAB4) (Bacillus weihenstephanensis) protein is N-acetylmuramic acid 6-phosphate etherase.